The sequence spans 59 residues: uncharacterized protein (59 aa).

This is an uncharacterized protein from Caenorhabditis elegans.